We begin with the raw amino-acid sequence, 473 residues long: Cysteine--tRNA ligase (473 aa).

Zn(2+) is bound at residue Cys-28. The 'HIGH' region motif lies at 30–40 (VTVYDLCHLGH). 3 residues coordinate Zn(2+): Cys-213, His-238, and Glu-242. The 'KMSKS' region signature appears at 270–274 (KMSKS). Lys-273 lines the ATP pocket.

Belongs to the class-I aminoacyl-tRNA synthetase family. In terms of assembly, monomer. Zn(2+) is required as a cofactor.

It localises to the cytoplasm. The catalysed reaction is tRNA(Cys) + L-cysteine + ATP = L-cysteinyl-tRNA(Cys) + AMP + diphosphate. This is Cysteine--tRNA ligase from Blochmanniella pennsylvanica (strain BPEN).